A 398-amino-acid polypeptide reads, in one-letter code: Methionine aminopeptidase 1A (398 aa).

Alanine 2 is modified (N-acetylalanine). The segment at 12 to 65 (TLSCARCEKPAHLQCPKCIDLKLPREQASFCTQECFKAAWSSHKSVHVKAQLSS) adopts a C6H2-type zinc-finger fold. Positions 15, 18, 26, 29, 42, 46, 54, and 58 each coordinate Zn(2+). Histidine 214 lines the a protein pocket. Aspartate 231, aspartate 242, and histidine 305 together coordinate Zn(2+). A protein is bound at residue histidine 312. The Zn(2+) site is built by glutamate 338 and glutamate 369.

The protein belongs to the peptidase M24A family. Methionine aminopeptidase type 1 subfamily. In terms of assembly, associates with the 60S ribosomal subunit of the 80S translational complex. Requires Zn(2+) as cofactor. Co(2+) is required as a cofactor. Mn(2+) serves as cofactor. It depends on Fe(2+) as a cofactor. Ubiquitous.

Its subcellular location is the cytoplasm. It carries out the reaction Release of N-terminal amino acids, preferentially methionine, from peptides and arylamides.. Cotranslationally removes the N-terminal methionine from nascent proteins. The N-terminal methionine is often cleaved when the second residue in the primary sequence is small and uncharged (Met-Ala-, Cys, Gly, Pro, Ser, Thr, or Val). The sequence is that of Methionine aminopeptidase 1A (MAP1A) from Arabidopsis thaliana (Mouse-ear cress).